The following is a 968-amino-acid chain: RNA polymerase-associated protein RapA (968 aa).

The 171-residue stretch at 164-334 (EVGQRHAPRV…FARLRLLDPD (171 aa)) folds into the Helicase ATP-binding domain. 177–184 (DEVGLGKT) contributes to the ATP binding site. The DEAH box motif lies at 280–283 (DEAH). A Helicase C-terminal domain is found at 490–644 (RVEWLLNYLV…TCPTGRTIYD (155 aa)).

This sequence belongs to the SNF2/RAD54 helicase family. RapA subfamily. Interacts with the RNAP. Has a higher affinity for the core RNAP than for the holoenzyme. Its ATPase activity is stimulated by binding to RNAP.

Its function is as follows. Transcription regulator that activates transcription by stimulating RNA polymerase (RNAP) recycling in case of stress conditions such as supercoiled DNA or high salt concentrations. Probably acts by releasing the RNAP, when it is trapped or immobilized on tightly supercoiled DNA. Does not activate transcription on linear DNA. Probably not involved in DNA repair. This Yersinia pestis bv. Antiqua (strain Antiqua) protein is RNA polymerase-associated protein RapA.